Reading from the N-terminus, the 129-residue chain is uncharacterized protein (129 aa).

The helical transmembrane segment at 5 to 25 (IIGLTLAFFVLFLTAVAILFT) threads the bilayer.

It is found in the membrane. This is an uncharacterized protein from Mycoplasma pneumoniae (strain ATCC 29342 / M129 / Subtype 1) (Mycoplasmoides pneumoniae).